A 271-amino-acid polypeptide reads, in one-letter code: Eukaryotic translation initiation factor 2 subunit beta (271 aa).

The segment at 223–247 (CLGCQSPDTILSKENRLFFLRCEKC) adopts a C4-type zinc-finger fold.

It belongs to the eIF-2-beta/eIF-5 family. In terms of assembly, eukaryotic translation initiation factor 2 eIF2 is a heterotrimeric complex composed of an alpha, a beta and a gamma subunit.

Its subcellular location is the cytoplasm. It is found in the cytosol. Functionally, component of the eIF2 complex that functions in the early steps of protein synthesis by forming a ternary complex with GTP and initiator tRNA. This complex binds to a 40S ribosomal subunit, followed by mRNA binding to form a 43S pre-initiation complex (43S PIC). Junction of the 60S ribosomal subunit to form the 80S initiation complex is preceded by hydrolysis of the GTP bound to eIF2 and release of an eIF2-GDP binary complex. In order for eIF2 to recycle and catalyze another round of initiation, the GDP bound to eIF2 must exchange with GTP by way of a reaction catalyzed by eIF2B. In Malus domestica (Apple), this protein is Eukaryotic translation initiation factor 2 subunit beta.